A 258-amino-acid polypeptide reads, in one-letter code: MFDGTTQAQDVAAAFQGEISGKTFVITGVSFGGLGAAVCEALAPYGPGHLIITGRDIQRPQEVAKALIAQYPDLQISVIQMDLALPKSVENAAQEIKKVASRVHVLVNNAGVMCIPDRTLTEKGIEAHLAINYVGHFLLTKLLAEQMSSTDSSPVQGRVINVSSSAHTVSPFRFGDPHFIGSSDLLPDEEPSREACKAFGIPWETSYSPLVAYAQSKTAVILHAKAISSGVLRDGITAFSVNPGGKWNPTILYVLCHC.

The NADP(+) site is built by L34, R59, D82, N109, and K141. S163 functions as the Proton donor in the catalytic mechanism. Position 193 (R193) interacts with NADP(+).

Belongs to the short-chain dehydrogenases/reductases (SDR) family.

The protein operates within secondary metabolite biosynthesis. Oxidoreductase; part of the fragmented gene cluster that mediates the biosynthesis of fusarochromene, a tryptophan-derived metabolite closely related to a group of mycotoxins including fusarochromanone. Within the pathway, fscI catalyzes the formation of the chromene ring from the prenyl moity added by the prenyltransferase fscG. The first step of the pathway is the epimerization of L-tryptophan to D-tryptophan in the presence of the NRPS-like tryptophan epimerase fscC. D-tryptophan is subsequently hydroxylated by the tryptophan 6-hydroxylase fscE to yield 6-hydroxytryptophan. The pyrrole ring undergoes cleavaged by the tryptophan 2,3-dioxygenase fscD and is finally converted to 4-hydroxykyrunenine by the hydrolase fscH. The NRPS-like oxidoreductase fscA reduces the carboxyl group to primary alcohol and the DMATS-type prenyltransferase fscG performs prenylation, followed by the formation of a chromene ring catalyzed by the oxidoreductase fscI, which leads to desacetylfusarochromene. Epoxidation by fscF and rearrangement reactions of chromene double bonds convert compound desacetylfusarochromene to fusarochromanones. Although specific acetyltransferases were not found near the fsc gene cluster, several predicted enzymes containing the N-acetyltransferase superfamily domain are present in the genome of F.equiseti. These predicted enzymes may have the potential to convert desacetylfusarochromene to fusarochromene. This is Oxidoreductase fscI from Fusarium equiseti (Fusarium scirpi).